Reading from the N-terminus, the 184-residue chain is Interferon alpha-3 (184 aa).

Residues 1 to 23 form the signal peptide; it reads MALPVSLLMALVVLSCHSSCSLG. 2 disulfide bridges follow: C24-C122 and C52-C162.

This sequence belongs to the alpha/beta interferon family.

The protein resides in the secreted. Produced by macrophages, IFN-alpha have antiviral activities. Interferon stimulates the production of two enzymes: a protein kinase and an oligoadenylate synthetase. In Equus caballus (Horse), this protein is Interferon alpha-3.